The primary structure comprises 104 residues: Protein RnfH (104 aa).

Belongs to the UPF0125 (RnfH) family.

This Pseudomonas syringae pv. syringae (strain B728a) protein is Protein RnfH.